We begin with the raw amino-acid sequence, 419 residues long: MAGSGCAWGAEPPRFLEAFGRLWQVQSRLGSGSSASVYRVRCCGNPGSPPGALKQFLPPGTTGAAASAAEYGFRKERAALEQLQGHRNIVTLYGVFTIHFSPNVPSRCLLLELLDVSVSELLLYSSHQGCSMWMIQHCARDVLEALAFLHHEGYVHADLKPRNILWSAENECFKLIDFGLSFKEGNQDVKYIQTDGYRAPEAELQNCLAQAGLQSDTECTSAVDLWSLGIILLEMFSGMKLKHTVRSQEWKANSSAIIDHIFASKAVVNAAIPAYHLRDLIKSMLHDDPSRRIPAEMALCSPFFSIPFAPHIEDLVMLPTPVLRLLNVLDDDYLENEEEYEDVVEDVKEECQKYGPVVSLLVPKENPGRGQVFVEYANAGDSKAAQKLLTGRMFDGKFVVATFYPLSAYKRGYLYQTLL.

The Protein kinase domain maps to 23-304 (WQVQSRLGSG…AEMALCSPFF (282 aa)). ATP-binding positions include 29 to 37 (LGSGSSASV) and lysine 54. Active-site proton acceptor residues include aspartate 141 and aspartate 158. Residues 324-406 (RLLNVLDDDY…KFVVATFYPL (83 aa)) form the RRM domain.

It belongs to the protein kinase superfamily. Ser/Thr protein kinase family. Interacts with stathmin, PAM and CDKN1B/p27Kip1.

Its subcellular location is the nucleus. It carries out the reaction L-seryl-[protein] + ATP = O-phospho-L-seryl-[protein] + ADP + H(+). The catalysed reaction is L-threonyl-[protein] + ATP = O-phospho-L-threonyl-[protein] + ADP + H(+). Its function is as follows. Upon serum stimulation, phosphorylates CDKN1B/p27Kip1, thus controlling CDKN1B subcellular location and cell cycle progression in G1 phase. May be involved in trafficking and/or processing of RNA. In Pongo abelii (Sumatran orangutan), this protein is Serine/threonine-protein kinase Kist (UHMK1).